A 525-amino-acid polypeptide reads, in one-letter code: MAHKVTSANEPNPLTGKRLSSCPLTRSGVTEVAQIAGRTPKMEDFVPWTVDNLKSQFEAVGLLMAHSYLPANAEEGIAYPPLVHTYESLSPASTCRVCDLLDTLVNHSDAPVAFFEDYALLCYYCLNAPRAWISSLITGMDFLHILIKYFPMAGGLDSLFMPSRILAIDIQLHFYICRCFLPVSSSDMIRNANLGYYKLEFLKSILTGQSPANFCFKSMWPRTTPTFLTLPGPRTCKDSQDVPGDVGRGLYTALCCHLPTRNRVQHPFLRAEKGGLSPEITTKADYCGLLLGTWQGTDLLGGPGHHAIGLNAEYSGDELAELALAITRPEAGDHSQGPCLLAPMFGLRHKNASRTICPLCESLGAHPDAKDTLDRFKSLILDSFGNNIKILDRIVFLIKTQNTLLDVPCPRLRAWLQMCTPQDFHKHLFCDPLCAINHSITNPSVLFGQIYPPSFQAFKAALAAGQNLEQGVCDSLITLVYIFKSTQVARVGKTILVDVTKELDVVLRIHGLDLVQSYQTSQVYV.

Residues 1–12 are compositionally biased toward polar residues; that stretch reads MAHKVTSANEPN. The interval 1–20 is disordered; sequence MAHKVTSANEPNPLTGKRLS. Zn(2+) is bound by residues cysteine 95, cysteine 98, histidine 173, cysteine 179, cysteine 255, cysteine 256, cysteine 357, cysteine 360, histidine 427, cysteine 434, cysteine 473, and histidine 510. Zinc finger regions lie at residues 95–179, 255–510, and 357–434; these read CRVC…ICRC, CCHL…LRIH, and CPLC…DPLC.

This sequence belongs to the herpesviridae UL32 protein family.

The protein localises to the host cytoplasm. Its subcellular location is the host nucleus. Plays a role in efficient localization of neo-synthesized capsids to nuclear replication compartments, thereby controlling cleavage and packaging of virus genomic DNA. The chain is Packaging protein UL32 homolog from Epstein-Barr virus (strain B95-8) (HHV-4).